Reading from the N-terminus, the 237-residue chain is MRRVTRNGVLAVAASGALAVTMPAYAAFASDGAGAEGSAAGSPGLISGNTVQLPVDVPVDVCGNTVNVVGLLNPAAGNGCADSGEPGASYQAAGASGGTSGSATEATSGGAAAEGSGKDSPGVLSGNGVQLPVHLPVNVSGNSVNVVGIGNPAVGNESTNDSGDHPEPVRPPAEPEPSAPEEERAGPGPSAHAAPPREEVSLAHTGTDRTLPTLAGGAALVLGGTVLYRRFRPGSGD.

An N-terminal signal peptide occupies residues 1 to 26 (MRRVTRNGVLAVAASGALAVTMPAYA). The 41-residue stretch at 42 to 82 (SPGLISGNTVQLPVDVPVDVCGNTVNVVGLLNPAAGNGCAD) folds into the Chaplin 1 domain. Disordered stretches follow at residues 81–127 (ADSG…LSGN) and 148–216 (GIGN…TLAG). Over residues 101–115 (GSATEATSGGAAAEG) the composition is skewed to low complexity. In terms of domain architecture, Chaplin 2 spans 120–160 (SPGVLSGNGVQLPVHLPVNVSGNSVNVVGIGNPAVGNESTN). A compositionally biased stretch (pro residues) spans 169–178 (VRPPAEPEPS). The short motif at 202–206 (LAHTG) is the LPXTG sorting signal element. Thr-205 is subject to Pentaglycyl murein peptidoglycan amidated threonine. Positions 206–237 (GTDRTLPTLAGGAALVLGGTVLYRRFRPGSGD) are cleaved as a propeptide — removed by sortase.

The protein belongs to the chaplin family. Long chaplin subfamily.

It is found in the secreted. It localises to the cell wall. One of 8 partially redundant surface-active proteins required for efficient formation of aerial mycelium; the short chaplins assemble into a hydrophobic, amyloidal fibrillar surface layer that envelopes and protects aerial hyphae and spores, presumably anchored to the long chaplins. Chaplins have an overlapping function with the surface-active SapB peptide; chaplins are essential on minimal medium while on rich medium both chaplins and SapB are required for efficient aerial hyphae formation. The long chaplins (ChpA, ChpB, ChpC) are not absolutely necessary for short chaplin localization or rodlet formation, but probably play a role in initiating aerial hyphae development. Chaplins are also involved in cell attachment to a hydrophobic surface. The sequence is that of Chaplin-B from Streptomyces coelicolor (strain ATCC BAA-471 / A3(2) / M145).